Consider the following 567-residue polypeptide: Maltase A2 (567 aa).

The first 23 residues, 1-23 (MPKWAHLGLAALLLISTTQEGTA), serve as a signal peptide directing secretion. N-linked (GlcNAc...) asparagine glycans are attached at residues Asn-30, Asn-124, and Asn-198. Residue Asp-226 is the Nucleophile of the active site. The active-site Proton donor is Glu-298. An N-linked (GlcNAc...) asparagine glycan is attached at Asn-312.

It belongs to the glycosyl hydrolase 13 family.

It carries out the reaction Hydrolysis of terminal, non-reducing (1-&gt;4)-linked alpha-D-glucose residues with release of alpha-D-glucose.. In Drosophila melanogaster (Fruit fly), this protein is Maltase A2 (Mal-A2).